Consider the following 297-residue polypeptide: MATH domain and coiled-coil domain-containing protein At2g05420 (297 aa).

Residues S7–V139 form the MATH domain. Residues K239–K281 are a coiled coil.

In Arabidopsis thaliana (Mouse-ear cress), this protein is MATH domain and coiled-coil domain-containing protein At2g05420.